The chain runs to 598 residues: Aluminum-activated malate transporter 9 (598 aa).

Helical transmembrane passes span 88–108, 117–137, 144–164, 170–190, 194–214, and 227–247; these read IVFS…IFYQ, YSVW…GATL, ALGT…STLF, IFCT…KLYP, AYEY…ISGF, and FLLI…IYPI.

It belongs to the aromatic acid exporter (TC 2.A.85) family. Expressed in hypocotyls, leaves, roots, flowers, sepals and stamina. In leaves, expressed almost exclusively in mesophyll cells.

It localises to the vacuole membrane. With respect to regulation, slow activation by external aluminum. Vacuolar malate channel. Has a higher selectivity for malate than for fumarate. Also exhibits a weak chloride conductance. The polypeptide is Aluminum-activated malate transporter 9 (ALMT9) (Arabidopsis thaliana (Mouse-ear cress)).